The chain runs to 100 residues: Small ribosomal subunit protein uS17 (100 aa).

The protein belongs to the universal ribosomal protein uS17 family. In terms of assembly, part of the 30S ribosomal subunit.

One of the primary rRNA binding proteins, it binds specifically to the 5'-end of 16S ribosomal RNA. This Fervidobacterium nodosum (strain ATCC 35602 / DSM 5306 / Rt17-B1) protein is Small ribosomal subunit protein uS17.